The chain runs to 458 residues: Ammonium transporter Rh type B (458 aa).

Over 1–13 (MAKSPRRVAGRRL) the chain is Cytoplasmic. Residues 14–34 (LLPLLCLFFQGATAILFAIFV) traverse the membrane as a helical segment. Topologically, residues 35 to 61 (RYDQQTDAALWHGGNHSNADNEFYFRY) are extracellular. An N-linked (GlcNAc...) asparagine glycan is attached at asparagine 49. A helical transmembrane segment spans residues 62-82 (PSFQDVHAMVFVGFGFLMVFL). The Cytoplasmic segment spans residues 83–86 (QRYG). Residues 87–107 (YSSLGFTFLLGAFALQWATLV) form a helical membrane-spanning segment. Topologically, residues 108–124 (QGFLHSFHGGHIHVGME) are extracellular. A helical membrane pass occupies residues 125-145 (SLINADFCAGAVLISFGAVLG). Over 146-149 (KTGP) the chain is Cytoplasmic. Residues 150–170 (AQLLLMALLEVALFGLNEFVL) traverse the membrane as a helical segment. The Extracellular segment spans residues 171-178 (LCLLGVRD). A helical membrane pass occupies residues 179–201 (AGGSMTIHTFGAYFGLVLSRVLY). At 202 to 219 (RPHLEKSQHRQGSVYHSD) the chain is on the cytoplasmic side. Residues 220–240 (LFAMIGTIFLWIFWPSFNSAL) traverse the membrane as a helical segment. The Extracellular segment spans residues 241-251 (TSRGDGQPRTA). Residues 252-272 (LNTYYSLTASTLSTFALSALV) traverse the membrane as a helical segment. Over 273–282 (GKDGRLDMVH) the chain is Cytoplasmic. Residues 283–303 (VQNAALAGGVVVGTASEMMLT) form a helical membrane-spanning segment. A topological domain (extracellular) is located at residue proline 304. The helical transmembrane segment at 305-325 (FGALAAGCLAGAISTLGYKFF) threads the bilayer. The Cytoplasmic segment spans residues 326-346 (TPILESKLKIQDTCGVHNLHG). Residues 347 to 367 (MPGVLGALLGALMTGLTTHEA) traverse the membrane as a helical segment. Residues 368–393 (YGDGLQSVFPLIAEGQRSATSQAIYQ) are Extracellular-facing. A helical membrane pass occupies residues 394–414 (LFGLSVTLLFASAGGVLGGLL). At 415–458 (LKLPFLDAPPDSQCYEDQMCWEVPGEHGYEAQEALRVEEPDTEA) the chain is on the cytoplasmic side. Residues 416 to 424 (KLPFLDAPP) are interaction with ANK3. A Basolateral sorting signal motif is present at residues 429-432 (YEDQ).

The protein belongs to the ammonium transporter (TC 2.A.49) family. Rh subfamily. Interacts (via C-terminus) with ANK2 and ANK3; required for targeting to the basolateral membrane. Post-translationally, N-glycosylated.

It localises to the cell membrane. Its subcellular location is the basolateral cell membrane. It carries out the reaction NH4(+)(in) = NH4(+)(out). The catalysed reaction is methylamine(out) = methylamine(in). The enzyme catalyses CO2(out) = CO2(in). In terms of biological role, ammonium transporter involved in the maintenance of acid-base homeostasis. Transports ammonium and its related derivative methylammonium across the basolateral plasma membrane of epithelial cells likely contributing to renal transepithelial ammonia transport and ammonia metabolism. May transport either NH4(+) or NH3 ammonia species predominantly mediating an electrogenic NH4(+) transport. May act as a CO2 channel providing for renal acid secretion. This chain is Ammonium transporter Rh type B (RHBG), found in Oryctolagus cuniculus (Rabbit).